The following is a 313-amino-acid chain: MMVDENVETKASTLVASVDHGFGSGSGHDHHGLSASVPLLGVNWKKRRMPRQRRSSSSFNLLSFPPPMPPISHVPTPLPARKIDPRKLRFLFQKELKNSDVSSLRRMILPKKAAEAHLPALECKEGIPIRMEDLDGFHVWTFKYRYWPNNNSRMYVLENTGDFVNAHGLQLGDFIMVYQDLYSNNYVIQARKASEEEEVDVINLEEDDVYTNLTRIENTVVNDLLLQDFNHHNNNNNNNSNSNSNKCSYYYPVIDDVTTNTESFVYDTTALTSNDTPLDFLGGHTTTTNNYYSKFGTFDGLGSVENISLDDFY.

Residues 92–194 (FQKELKNSDV…NYVIQARKAS (103 aa)) constitute a DNA-binding region (TF-B3).

In terms of assembly, interacts with KIN10. In terms of processing, phosphorylation by KIN10 increases its stability. Phosphorylated at one or more of the Ser-55, Ser-56 and/or Ser-57 residues. As to expression, expressed in cotyledons and hypocotyls.

It is found in the nucleus. Its activity is regulated as follows. Phosphorylation by KIN10 is required to positively regulates embryogenesis, seed yield, and plant growth at high temperature. Its function is as follows. Transcription regulator involved in gene regulation during late embryogenesis. Its expression to the epidermis is sufficient to control foliar organ identity by regulating positively the synthesis abscisic acid (ABA) and negatively gibberellin production. Negatively regulates TTG1 in the embryo. Positively regulates the abundance of the ABI3 protein in the seed. Cooperates with KIN10 to regulate developmental phase transitions and lateral organ development and act both as positive regulators of abscisic acid (ABA) signaling during germination. This chain is B3 domain-containing transcription factor FUS3 (FUS3), found in Arabidopsis thaliana (Mouse-ear cress).